The following is a 233-amino-acid chain: Type II methyltransferase M.MunI (233 aa).

Belongs to the MT-A70-like family.

The enzyme catalyses a 2'-deoxyadenosine in DNA + S-adenosyl-L-methionine = an N(6)-methyl-2'-deoxyadenosine in DNA + S-adenosyl-L-homocysteine + H(+). A methylase that recognizes the double-stranded sequence 5'-CAATTG-3', methylates A-3 on both strands, and protects the DNA from cleavage by the MunI endonuclease. This chain is Type II methyltransferase M.MunI, found in Mycoplasma sp.